The sequence spans 160 residues: Peripheral myelin protein 22 (160 aa).

A topological domain (cytoplasmic) is located at residue Met1. A helical transmembrane segment spans residues 2–31 (LLLLLGILFLHIAVLVLLFVSTIVSQWLVG). Over 32 to 64 (NGHRTDLWQNCTTSALGAVQHCYSSSVSEWLQS) the chain is Extracellular. The N-linked (GlcNAc...) asparagine glycan is linked to Asn41. A helical transmembrane segment spans residues 65 to 91 (VQATMILSVIFSVLSLFLFFCQLFTLT). The Cytoplasmic portion of the chain corresponds to 92-95 (KGGR). The helical transmembrane segment at 96 to 119 (FYITGVFQILAGLCVMSAAAIYTV) threads the bilayer. At 120–133 (RHSEWHVNNDYSYG) the chain is on the extracellular side. The helical transmembrane segment at 134–156 (FAYILAWVAFPLALLSGIIYVIL) threads the bilayer. Residues 157–160 (RKRE) are Cytoplasmic-facing.

This sequence belongs to the PMP-22/EMP/MP20 family. Ubiquitinated by the DCX(DCAF13) E3 ubiquitin ligase complex, leading to its degradation. In terms of tissue distribution, found exclusively in the peripheral nervous system. Present in both myelinating and nonmyelinating Schwann cells. Found in the tumors of Schwann cell lineage where axons are present (neurofibromas) but not where axons are absent (schwannomas).

Its subcellular location is the cell membrane. Might be involved in growth regulation, and in myelinization in the peripheral nervous system. This chain is Peripheral myelin protein 22 (Pmp22), found in Rattus norvegicus (Rat).